We begin with the raw amino-acid sequence, 563 residues long: MDTKTLIASEIAKVVPELEQDAIFNLLETPKNSDMGDLAFPAFSLAKVLRKAPQMIASELAEQIDESQFEKVVAVGPYINFFLDKAKISSQVLEQVITAGSDYAQQDEGQGRNVAIDMSSPNIAKPFSIGHLRSTVIGDSLAHIFAKMGYKPVKINHLGDWGKQFGMLIVAYKKWGDEAAVQAHPIDELLKLYVRINAEAETDPTVDEEAREWFRKLEDGDKEATELWQWFRDESLLEFNRLYDQLHVTFDSYNGEAFYNDKMDEVLDLLEAKNLLVESKGAQVVNLEKYGIEHPALIKKSDGATLYITRDLAAALYRKRTYDFAKSVYVVGNEQAAHFKQLKAVLKEMGYDWSDDMTHVAFGLVTKGGAKLSTRKGNVILLEPTVAEAINRAASQIEAKNPNLADKEAVAHAVGVGAIKFYDLKTDRMNGYDFDLEAMVSFEGETGPYVQYAHARIQSILRKADFTPSATTTYSLADAESWEIIKLIQDFPRIIKRTSDNFEPSIMAKFAINLAQSFNKYYAHTRILDDNSERDNRLALCYATATVLKEALRLLSVDAPNEM.

Residues 121 to 131 carry the 'HIGH' region motif; the sequence is PNIAKPFSIGH.

Belongs to the class-I aminoacyl-tRNA synthetase family. As to quaternary structure, monomer.

Its subcellular location is the cytoplasm. It catalyses the reaction tRNA(Arg) + L-arginine + ATP = L-arginyl-tRNA(Arg) + AMP + diphosphate. This Streptococcus pyogenes serotype M12 (strain MGAS2096) protein is Arginine--tRNA ligase.